Reading from the N-terminus, the 120-residue chain is Ribonuclease P protein component (120 aa).

This sequence belongs to the RnpA family. In terms of assembly, consists of a catalytic RNA component (M1 or rnpB) and a protein subunit.

It carries out the reaction Endonucleolytic cleavage of RNA, removing 5'-extranucleotides from tRNA precursor.. Functionally, RNaseP catalyzes the removal of the 5'-leader sequence from pre-tRNA to produce the mature 5'-terminus. It can also cleave other RNA substrates such as 4.5S RNA. The protein component plays an auxiliary but essential role in vivo by binding to the 5'-leader sequence and broadening the substrate specificity of the ribozyme. The chain is Ribonuclease P protein component from Mycobacterium marinum (strain ATCC BAA-535 / M).